Here is an 84-residue protein sequence, read N- to C-terminus: Hepcidin (84 aa).

The N-terminal stretch at 1–24 (MALSSQIWAACLLLLLLLASLTSG) is a signal peptide. Positions 25–54 (SVFPQQTGQLAELQPQDRAGARASWMPMFQ) are excised as a propeptide. Cystine bridges form between Cys-66-Cys-82, Cys-69-Cys-72, Cys-70-Cys-78, and Cys-73-Cys-81.

The protein belongs to the hepcidin family. Interacts with SLC40A1; this interaction promotes SLC40A1 rapid ubiquitination. Highest expression in liver and to a lesser extent in heart and brain. Low levels in lung, tonsils, salivary gland, trachea, prostate gland, adrenal gland and thyroid gland. Secreted into the urine and blood. Expressed by hepatocytes.

Its subcellular location is the secreted. In terms of biological role, liver-produced hormone that constitutes the main circulating regulator of iron absorption and distribution across tissues. Acts by promoting endocytosis and degradation of ferroportin/SLC40A1, leading to the retention of iron in iron-exporting cells and decreased flow of iron into plasma. Controls the major flows of iron into plasma: absorption of dietary iron in the intestine, recycling of iron by macrophages, which phagocytose old erythrocytes and other cells, and mobilization of stored iron from hepatocytes. Has strong antimicrobial activity against E.coli ML35P N.cinerea and weaker against S.epidermidis, S.aureus and group b streptococcus bacteria. Active against the fungus C.albicans. No activity against P.aeruginosa. The polypeptide is Hepcidin (Homo sapiens (Human)).